Here is a 694-residue protein sequence, read N- to C-terminus: NADPH--cytochrome P450 reductase (694 aa).

Residues 1 to 8 (MAQLDTLD) are Lumenal-facing. A helical membrane pass occupies residues 9-31 (LVVLAVLLVGSVAYFTKGTYWAV). The Cytoplasmic portion of the chain corresponds to 32–694 (AKDPYASTGP…RGRYQEDVWS (663 aa)). A Flavodoxin-like domain is found at 66-220 (CVIFYGSQTG…DFLAWKEPMW (155 aa)). FMN-binding positions include 72–77 (SQTGTA), 123–126 (ATYG), 168–177 (LGNNTYEHYN), and Asp203. An FAD-binding FR-type domain is found at 276 to 537 (HNPFIAPIAE…HVRHSNFKLP (262 aa)). Residue Arg295 participates in NADP(+) binding. FAD is bound by residues 450 to 453 (RYYS), 468 to 470 (TAV), and 485 to 488 (GVTT). NADP(+) is bound by residues Thr551, 613 to 614 (SR), 619 to 623 (KVYVQ), and Glu655. Position 693 (Trp693) interacts with FAD.

Belongs to the NADPH--cytochrome P450 reductase family. The protein in the N-terminal section; belongs to the flavodoxin family. This sequence in the C-terminal section; belongs to the flavoprotein pyridine nucleotide cytochrome reductase family. The cofactor is FAD. FMN is required as a cofactor.

The protein localises to the endoplasmic reticulum membrane. The protein resides in the mitochondrion outer membrane. It localises to the cell membrane. It carries out the reaction 2 oxidized [cytochrome P450] + NADPH = 2 reduced [cytochrome P450] + NADP(+) + H(+). This enzyme is required for electron transfer from NADP to cytochrome P450 in microsomes. It can also provide electron transfer to heme oxygenase and cytochrome B5. Involved in ergosterol biosynthesis. This Aspergillus niger protein is NADPH--cytochrome P450 reductase.